Here is a 506-residue protein sequence, read N- to C-terminus: RNA-splicing ligase RtcB homolog 1 (506 aa).

Positions 120, 123, 228, 260, and 354 each coordinate Mn(2+). 227–231 (NHYAE) is a GMP binding site. Residues 354–355 (HN), 403–406 (GGSM), Ser410, 429–432 (HGAG), and Lys505 contribute to the GMP site. The active-site GMP-histidine intermediate is His429.

It belongs to the RtcB family. In terms of assembly, catalytic component of the tRNA-splicing ligase complex. Mn(2+) is required as a cofactor.

The enzyme catalyses a 3'-end 3'-phospho-ribonucleotide-RNA + a 5'-end dephospho-ribonucleoside-RNA + GTP = a ribonucleotidyl-ribonucleotide-RNA + GMP + diphosphate. The catalysed reaction is a 3'-end 2',3'-cyclophospho-ribonucleotide-RNA + a 5'-end dephospho-ribonucleoside-RNA + GTP + H2O = a ribonucleotidyl-ribonucleotide-RNA + GMP + diphosphate + H(+). Its function is as follows. Catalytic subunit of the tRNA-splicing ligase complex that acts by directly joining spliced tRNA halves to mature-sized tRNAs by incorporating the precursor-derived splice junction phosphate into the mature tRNA as a canonical 3',5'-phosphodiester. May act as an RNA ligase with broad substrate specificity, and may function toward other RNAs. This chain is RNA-splicing ligase RtcB homolog 1, found in Culex quinquefasciatus (Southern house mosquito).